The sequence spans 149 residues: Calmodulin (149 aa).

At A2 the chain carries N-acetylalanine. EF-hand domains lie at 8–43, 44–79, 81–116, and 117–149; these read EQIA…LGQN, PTEA…KMKD, DSEE…LGEK, and LTDE…MMAK. Positions 21, 23, 25, 27, 32, 57, 59, 61, 63, 68, 94, 96, 98, and 105 each coordinate Ca(2+). K116 carries the N6,N6,N6-trimethyllysine modification. Ca(2+) is bound by residues D130, D132, D134, Q136, and E141.

Belongs to the calmodulin family. Post-translationally, the N-terminus is blocked.

Calmodulin mediates the control of a large number of enzymes, ion channels and other proteins by Ca(2+). Among the enzymes to be stimulated by the calmodulin-Ca(2+) complex are a number of protein kinases and phosphatases. This chain is Calmodulin, found in Spinacia oleracea (Spinach).